Reading from the N-terminus, the 403-residue chain is uncharacterized protein (403 aa).

Helical transmembrane passes span 25 to 47 (IAFFLAGFSTFSTLYCVQPILFL), 62 to 81 (SLSASTAMMAFGMLFTGPLS), 88 to 110 (VVMSSSLFLASFCTFCCSNMNSW), 114 to 136 (IFMRALTGLALSGVAAVAMTYLS), 143 to 165 (VLSFSIGLYISGNTIGGFLGRFL), 175 to 197 (WNIALEFISFLAFTSAVLFVYLL), 229 to 251 (LFFMGCILMGSFITLFNYVGYRL), 256 to 278 (FFLGQTTIGLLSIIYLIGVYSSP), 290 to 307 (GVILTLALTMMIFGVLIT), 311 to 330 (IVLLIIVGLTLFAAGFFAAH), 350 to 372 (SIYLFSYYLGSSIFGTFSGIFWI), and 376 to 398 (WLGISIFIITFLCIGILLSIRLL).

The protein belongs to the major facilitator superfamily.

The protein resides in the cell membrane. This is an uncharacterized protein from Buchnera aphidicola subsp. Baizongia pistaciae (strain Bp).